Reading from the N-terminus, the 148-residue chain is Lipoprotein signal peptidase (148 aa).

The next 2 membrane-spanning stretches (helical) occupy residues 57-77 and 80-100; these read QWIFIIVALLATVFGLYYLNT and VHIFGRLGIILIISGALGNLI. Active-site residues include D110 and D126. The chain crosses the membrane as a helical span at residues 124 to 144; sequence IADVFVVVGTVFLCIYVLFFE.

This sequence belongs to the peptidase A8 family.

It localises to the cell membrane. It carries out the reaction Release of signal peptides from bacterial membrane prolipoproteins. Hydrolyzes -Xaa-Yaa-Zaa-|-(S,diacylglyceryl)Cys-, in which Xaa is hydrophobic (preferably Leu), and Yaa (Ala or Ser) and Zaa (Gly or Ala) have small, neutral side chains.. It functions in the pathway protein modification; lipoprotein biosynthesis (signal peptide cleavage). Its function is as follows. This protein specifically catalyzes the removal of signal peptides from prolipoproteins. This Clostridioides difficile (strain 630) (Peptoclostridium difficile) protein is Lipoprotein signal peptidase.